The sequence spans 398 residues: Serpin-ZX (398 aa).

Residues 342 to 366 are RCL; the sequence is GTEAAARTARVVTLRSLPVEPVKVD.

Belongs to the serpin family. In terms of tissue distribution, expressed in roots, coleoptiles, shoots, leaves, embryo and endosperm.

In terms of biological role, inhibits chymotrypsin, cathepsin G and trypsin in vitro. The protein is Serpin-ZX (PAZX) of Hordeum vulgare (Barley).